The chain runs to 259 residues: DNA-directed RNA polymerase subunit Rpo3 (259 aa).

It belongs to the archaeal Rpo3/eukaryotic RPB3 RNA polymerase subunit family. Part of the RNA polymerase complex.

Its subcellular location is the cytoplasm. It catalyses the reaction RNA(n) + a ribonucleoside 5'-triphosphate = RNA(n+1) + diphosphate. Its function is as follows. DNA-dependent RNA polymerase (RNAP) catalyzes the transcription of DNA into RNA using the four ribonucleoside triphosphates as substrates. The sequence is that of DNA-directed RNA polymerase subunit Rpo3 from Pyrococcus horikoshii (strain ATCC 700860 / DSM 12428 / JCM 9974 / NBRC 100139 / OT-3).